Reading from the N-terminus, the 92-residue chain is DNA-directed RNA polymerase subunit omega (92 aa).

Belongs to the RNA polymerase subunit omega family. The RNAP catalytic core consists of 2 alpha, 1 beta, 1 beta' and 1 omega subunit. When a sigma factor is associated with the core the holoenzyme is formed, which can initiate transcription.

It catalyses the reaction RNA(n) + a ribonucleoside 5'-triphosphate = RNA(n+1) + diphosphate. Its function is as follows. Promotes RNA polymerase assembly. Latches the N- and C-terminal regions of the beta' subunit thereby facilitating its interaction with the beta and alpha subunits. The protein is DNA-directed RNA polymerase subunit omega of Shewanella sp. (strain ANA-3).